Consider the following 865-residue polypeptide: Outer membrane usher protein HtrE (865 aa).

A signal peptide spans 1–29; sequence MTIEYTKNYHHLTRIATFCALLYCNTAFS. An intrachain disulfide couples cysteine 838 to cysteine 862.

Belongs to the fimbrial export usher family.

It is found in the cell outer membrane. Its function is as follows. Part of the yadCKLM-htrE-yadVN fimbrial operon. Could contribute to adhesion to various surfaces in specific environmental niches. Probably involved in the export and assembly of fimbrial subunits across the outer membrane. The protein is Outer membrane usher protein HtrE (htrE) of Escherichia coli (strain K12).